The chain runs to 467 residues: UDP-N-acetylmuramate--L-alanine ligase (467 aa).

Residue G114 to T120 participates in ATP binding.

It belongs to the MurCDEF family.

The protein localises to the cytoplasm. The catalysed reaction is UDP-N-acetyl-alpha-D-muramate + L-alanine + ATP = UDP-N-acetyl-alpha-D-muramoyl-L-alanine + ADP + phosphate + H(+). The protein operates within cell wall biogenesis; peptidoglycan biosynthesis. Functionally, cell wall formation. This Rhodopseudomonas palustris (strain BisB5) protein is UDP-N-acetylmuramate--L-alanine ligase.